Here is a 132-residue protein sequence, read N- to C-terminus: Secreted RxLR effector protein RXLR-C22 (132 aa).

A signal peptide spans 1-21; it reads MRSLVWAVIATLIVLTPFSEA. The RxLR-dEER signature appears at 56-74; sequence RKLQSDSVKKGDSTGLEER. The N-linked (GlcNAc...) asparagine glycan is linked to N116.

Belongs to the RxLR effector family.

Its subcellular location is the secreted. The protein localises to the host Golgi apparatus. Its function is as follows. Secreted effector that does not suppress pattern-triggered immunity (PTI) in plant host. The chain is Secreted RxLR effector protein RXLR-C22 from Plasmopara halstedii (Downy mildew of sunflower).